Reading from the N-terminus, the 950-residue chain is Leucine--tRNA ligase (950 aa).

Residues 72 to 83 (PYPSGEGLHVGH) carry the 'HIGH' region motif. Residues 722-726 (KIGKS) carry the 'KMSKS' region motif. K725 lines the ATP pocket.

The protein belongs to the class-I aminoacyl-tRNA synthetase family.

It is found in the cytoplasm. It catalyses the reaction tRNA(Leu) + L-leucine + ATP = L-leucyl-tRNA(Leu) + AMP + diphosphate. In Mycobacterium sp. (strain JLS), this protein is Leucine--tRNA ligase.